A 230-amino-acid chain; its full sequence is Cytidylate kinase (230 aa).

12–20 (GPSGTGKST) contributes to the ATP binding site.

It belongs to the cytidylate kinase family. Type 1 subfamily.

It localises to the cytoplasm. The enzyme catalyses CMP + ATP = CDP + ADP. It carries out the reaction dCMP + ATP = dCDP + ADP. This is Cytidylate kinase from Corynebacterium efficiens (strain DSM 44549 / YS-314 / AJ 12310 / JCM 11189 / NBRC 100395).